Reading from the N-terminus, the 439-residue chain is Trigger factor (439 aa).

The 86-residue stretch at 175–260 folds into the PPIase FKBP-type domain; the sequence is GDRVTISYRS…VERLSVKDEI (86 aa).

It belongs to the FKBP-type PPIase family. Tig subfamily.

It localises to the cytoplasm. The enzyme catalyses [protein]-peptidylproline (omega=180) = [protein]-peptidylproline (omega=0). Functionally, involved in protein export. Acts as a chaperone by maintaining the newly synthesized protein in an open conformation. Functions as a peptidyl-prolyl cis-trans isomerase. The polypeptide is Trigger factor (Anaplasma phagocytophilum (strain HZ)).